A 160-amino-acid chain; its full sequence is C-type lectin mosGCTL-1 (160 aa).

The first 20 residues, 1 to 20 (MLTKGITLILLLVLVHSSHG), serve as a signal peptide directing secretion. Residues 23–140 (TPNRKFYIPS…YHWSWNDNTC (118 aa)) enclose the C-type lectin domain. Disulfide bonds link cysteine 44–cysteine 140 and cysteine 120–cysteine 140. An N-linked (GlcNAc...) asparagine glycan is attached at asparagine 76.

As to quaternary structure, interacts with putative receptor-type tyrosine-protein phosphatase mosPTP-1; the interaction probably mediates the recruitment of West Nile virus particles in complex with C-type lectin mosGCTL-1 to the cell surface. (Microbial infection) Interacts with envelope protein E and virions of West Nile virus in a calcium-dependent manner. As to expression, female salivary gland (at protein level).

The protein localises to the secreted. Its function is as follows. Putative lectin. In terms of biological role, (Microbial infection) Facilitates West Nile virus infection in mosquitoes probably via capturing viral particles and presenting them to a ligand on the cell surface, thereby facilitating viral entry. This is C-type lectin mosGCTL-1 from Aedes aegypti (Yellowfever mosquito).